Reading from the N-terminus, the 556-residue chain is Formate--tetrahydrofolate ligase (556 aa).

65–72 (TPAGEGKT) is an ATP binding site.

This sequence belongs to the formate--tetrahydrofolate ligase family.

The enzyme catalyses (6S)-5,6,7,8-tetrahydrofolate + formate + ATP = (6R)-10-formyltetrahydrofolate + ADP + phosphate. The protein operates within one-carbon metabolism; tetrahydrofolate interconversion. The sequence is that of Formate--tetrahydrofolate ligase from Clostridium cylindrosporum.